Consider the following 176-residue polypeptide: MNIIEQLEAEQAAKIAAKRTLPDFSAGDTVRVNVRVVEGSRTRVQAYEGVCIARSGGGLNESFTVRKISYGEGVERVFPVYSPLVESVEVVRRGKVRRAKLYYLRDRRGKSARIVENTGTRARKLNEAERQAVAEEKARIEAEKVAAAQALAAEKAAAEAAEKAAAEAKAAEAAAE.

This sequence belongs to the bacterial ribosomal protein bL19 family.

Its function is as follows. This protein is located at the 30S-50S ribosomal subunit interface and may play a role in the structure and function of the aminoacyl-tRNA binding site. This is Large ribosomal subunit protein bL19 from Sinorhizobium fredii (strain NBRC 101917 / NGR234).